The sequence spans 308 residues: Acetylglutamate kinase (308 aa).

Substrate-binding positions include 86-87, Arg-108, and Asn-201; that span reads GG.

The protein belongs to the acetylglutamate kinase family. ArgB subfamily.

The protein localises to the cytoplasm. It catalyses the reaction N-acetyl-L-glutamate + ATP = N-acetyl-L-glutamyl 5-phosphate + ADP. The protein operates within amino-acid biosynthesis; L-arginine biosynthesis; N(2)-acetyl-L-ornithine from L-glutamate: step 2/4. In terms of biological role, catalyzes the ATP-dependent phosphorylation of N-acetyl-L-glutamate. The protein is Acetylglutamate kinase of Prochlorococcus marinus (strain MIT 9313).